Reading from the N-terminus, the 229-residue chain is MDLLQFLAFLFVLLLSGMGATGTLRTSLDPSLEIYKKMFEVKRREQLLALKNLAQLNDIHQQYKILDVMLKGLFKVLEDSRTVLTAADVLPDGPFPQDEKLKDAFSHVVENTAFFGDVVLRFPRIVHYYFDHNSNWNLLIRWGISFCNQTGVFNQGPHSPILSLMAQELGISEKDSNFQNPFKIDRTEFIPSTDPFQKALREEEKRRKKEEKRKEIRKGPRISRSQSEL.

The N-terminal stretch at 1-22 (MDLLQFLAFLFVLLLSGMGATG) is a signal peptide. Residue Asn-148 is a short sequence motif, prevents secretion from ER. N-linked (GlcNAc...) asparagine glycosylation occurs at Asn-148. The tract at residues 193 to 229 (TDPFQKALREEEKRRKKEEKRKEIRKGPRISRSQSEL) is disordered. Residues 196 to 218 (FQKALREEEKRRKKEEKRKEIRK) are a coiled coil. The Nuclear localization signal motif lies at 206 to 213 (RRKKEEKR).

Belongs to the CCDC134 family. Interacts with TADA2A. Associates with the PCAF complex via TADA2A binding. In terms of processing, O-glycosylated, with additional sialic acid modifications. In terms of tissue distribution, expressed in cervical gland, cervical squamous epithelium, endometrium, stomach, kidney distal convoluted tubule, spermatogenic cells in testis, mammary gland, liver and striated muscle (at protein level). Also detected in placenta. Highest expression in testis relative to other tissues. Detected in T cells and dendritic cells; highly expressed in activated CD8(+) T cells, and also expressed at lower levels in CD4(+) T cells.

Its subcellular location is the endoplasmic reticulum lumen. The protein resides in the secreted. The protein localises to the cytoplasm. It is found in the nucleus. Molecular adapter required to prevent protein hyperglycosylation of HSP90B1: during translation, associates with nascent HSP90B1 and the STT3A catalytic component of the OST-A complex and tethers them to a specialized translocon that forms a microenvironment for HSP90B1 folding. In the CCDC134-containing translocon, STT3A associates with the SRT pseudosubstrate motif of HSP90B1, preventing access to facultative glycosylation sites until folding is completed, preventing hyperglycosylation and subsequent degradation of HSP90B1. In extracellular secreted form, promotes proliferation and activation of CD8(+) T-cells, suggesting a cytokine-like function. May inhibit ERK and JNK signaling activity. May suppress cell migration and invasion activity, via its effects on ERK and JNK signaling. May also localize in the nucleus: enhances stability of the PCAF histone acetyltransferase (HAT) complex member TADA2A and thus promotes PCAF-mediated histone acetyltransferase activity. Has a critical role in the regulation of osteogenesis and bone development. This Homo sapiens (Human) protein is Coiled-coil domain-containing protein 134.